The primary structure comprises 338 residues: Flap endonuclease 1 (338 aa).

The tract at residues 1-98 (MGTDIGDLLQ…ETLNRRKEVR (98 aa)) is N-domain. Positions 27, 80, 152, 154, 173, 175, and 236 each coordinate Mg(2+). The I-domain stretch occupies residues 116-257 (AAYKYAQASS…TALKLIKKHG (142 aa)). The interaction with PCNA stretch occupies residues 330–338 (RQQTLDQWF).

The protein belongs to the XPG/RAD2 endonuclease family. FEN1 subfamily. Interacts with PCNA. PCNA stimulates the nuclease activity without altering cleavage specificity. Requires Mg(2+) as cofactor.

In terms of biological role, structure-specific nuclease with 5'-flap endonuclease and 5'-3' exonuclease activities involved in DNA replication and repair. During DNA replication, cleaves the 5'-overhanging flap structure that is generated by displacement synthesis when DNA polymerase encounters the 5'-end of a downstream Okazaki fragment. Binds the unpaired 3'-DNA end and kinks the DNA to facilitate 5' cleavage specificity. Cleaves one nucleotide into the double-stranded DNA from the junction in flap DNA, leaving a nick for ligation. Also involved in the base excision repair (BER) pathway. Acts as a genome stabilization factor that prevents flaps from equilibrating into structures that lead to duplications and deletions. Also possesses 5'-3' exonuclease activity on nicked or gapped double-stranded DNA. The polypeptide is Flap endonuclease 1 (Methanosarcina barkeri (strain Fusaro / DSM 804)).